The following is an 864-amino-acid chain: Disintegrin and metalloproteinase domain-containing protein 15 (864 aa).

The signal sequence occupies residues 1–17 (MRLALLWALGLLGAGSP). Positions 18-45 (RPSPPLPNIGGTEEEQQASPERTLSGSM) are disordered. Residues 18-207 (RPSPPLPNIG…EQHHAHRLKR (190 aa)) constitute a propeptide that is removed on maturation. Positions 34 to 45 (QASPERTLSGSM) are enriched in polar residues. The short motif at 177–184 (HTCAPSWH) is the Cysteine switch element. Cys179 is a binding site for Zn(2+). Residues 208–696 (DVVTETKIVE…TQLKATSSLT (489 aa)) lie on the Extracellular side of the membrane. One can recognise a Peptidase M12B domain in the interval 214–415 (KIVELVIVAD…GMGSCLFERQ (202 aa)). N-linked (GlcNAc...) asparagine glycosylation is present at Asn238. Intrachain disulfides connect Cys324/Cys410, Cys366/Cys394, Cys368/Cys377, and Cys481/Cys501. His349 lines the Zn(2+) pocket. The active site involves Glu350. The Zn(2+) site is built by His353 and His359. Residues Asn390 and Asn393 are each glycosylated (N-linked (GlcNAc...) asparagine). The Disintegrin domain occupies 422 to 509 (SSLCGNMFVD…QCPSDIRLGD (88 aa)). Residues Asn607 and Asn612 are each glycosylated (N-linked (GlcNAc...) asparagine). Disulfide bonds link Cys658–Cys668, Cys662–Cys674, and Cys676–Cys685. In terms of domain architecture, EGF-like spans 658-686 (CRRKCHGHGVCDSSGHCRCEEGWAPPDCM). Residues 697–717 (TGLLLSLLLLLVLVLLGASYW) traverse the membrane as a helical segment. Phosphotyrosine; by HCK and LCK occurs at positions 716 and 736. At 718–864 (HRARLHQRLC…PPPAASSLYL (147 aa)) the chain is on the cytoplasmic side. The interval 736 to 864 (YRAPQSCPPE…PPPAASSLYL (129 aa)) is disordered. Over residues 741-750 (SCPPERPGPP) the composition is skewed to pro residues. Residues 752-762 (RAQQMTGTKQA) show a composition bias toward polar residues. 2 stretches are compositionally biased toward pro residues: residues 768-780 (PVPP…PNPV) and 814-825 (TKPPPPRKPLPA). 2 short sequence motifs (SH3-binding) span residues 816 to 822 (PPPPRKP) and 851 to 857 (RPAPPPP).

Interacts specifically with Src family protein-tyrosine kinases (PTKs). Interacts with ITAGV-ITGB3 (vitronectin receptor). Interacts with SH3GL2 and SNX9; this interaction occurs preferentially with ADAM15 precursor, rather than the processed form, suggesting it occurs in a secretory pathway compartment prior to the medial Golgi. Interacts with ITAG9-ITGB1. Interacts with SH3PXD2A. Interacts with ITAGV-ITGB1. Interacts with GRB2, HCK, ITSN1, ITSN2, LYN, MAPK1, MAPK3, NCF1, NCK1, nephrocystin, PTK6, SNX33, LCK and SRC. The cofactor is Zn(2+). The precursor is cleaved by a furin endopeptidase. An additional membrane proximal site of cleavage affects a small percentage of the proteins and results in disulfide-linked fragments. The prodomain is apparently cleaved in several positions that are N-terminal of the furin cleavage site. Post-translationally, may be partially sialylated. In terms of processing, phosphorylation increases association with PTKs. As to expression, expressed moderately in pericytes of retina. Expressed in testis and in spermatozoa from the caput, corpus, and cauda epididymis, as well as in non-capacitated and acrosome-reacted sperm (at protein level). Highly expressed in heart, brain, lung, and kidney. Expressed at lower levels in spleen, liver, testis and muscle.

It is found in the endomembrane system. Its subcellular location is the cell junction. The protein resides in the adherens junction. It localises to the cell projection. The protein localises to the cilium. It is found in the flagellum. Its subcellular location is the cytoplasmic vesicle. The protein resides in the secretory vesicle. It localises to the acrosome. In terms of biological role, active metalloproteinase with gelatinolytic and collagenolytic activity. Plays a role in the wound healing process. Mediates both heterotypic intraepithelial cell/T-cell interactions and homotypic T-cell aggregation. Inhibits beta-1 integrin-mediated cell adhesion and migration of airway smooth muscle cells. Suppresses cell motility on or towards fibronectin possibly by driving alpha-v/beta-1 integrin (ITAGV-ITGB1) cell surface expression via ERK1/2 inactivation. Cleaves E-cadherin in response to growth factor deprivation. Plays a role in glomerular cell migration. Plays a role in pathological neovascularization. May play a role in cartilage remodeling. May be proteolytically processed, during sperm epididymal maturation and the acrosome reaction. May play a role in sperm-egg binding through its disintegrin domain. Interactions with egg membrane could be mediated via binding between the disintegrin-like domain to one or more integrin receptors on the egg. This is Disintegrin and metalloproteinase domain-containing protein 15 (Adam15) from Mus musculus (Mouse).